Consider the following 138-residue polypeptide: Holo-[acyl-carrier-protein] synthase (138 aa).

Mg(2+)-binding residues include D11 and E65.

This sequence belongs to the P-Pant transferase superfamily. AcpS family. The cofactor is Mg(2+).

The protein localises to the cytoplasm. It carries out the reaction apo-[ACP] + CoA = holo-[ACP] + adenosine 3',5'-bisphosphate + H(+). Transfers the 4'-phosphopantetheine moiety from coenzyme A to a Ser of acyl-carrier-protein. The sequence is that of Holo-[acyl-carrier-protein] synthase from Ralstonia nicotianae (strain ATCC BAA-1114 / GMI1000) (Ralstonia solanacearum).